The primary structure comprises 149 residues: D-aminoacyl-tRNA deacylase (149 aa).

The Gly-cisPro motif, important for rejection of L-amino acids signature appears at 137–138 (GP).

It belongs to the DTD family. In terms of assembly, homodimer.

It is found in the cytoplasm. The catalysed reaction is glycyl-tRNA(Ala) + H2O = tRNA(Ala) + glycine + H(+). It carries out the reaction a D-aminoacyl-tRNA + H2O = a tRNA + a D-alpha-amino acid + H(+). An aminoacyl-tRNA editing enzyme that deacylates mischarged D-aminoacyl-tRNAs. Also deacylates mischarged glycyl-tRNA(Ala), protecting cells against glycine mischarging by AlaRS. Acts via tRNA-based rather than protein-based catalysis; rejects L-amino acids rather than detecting D-amino acids in the active site. By recycling D-aminoacyl-tRNA to D-amino acids and free tRNA molecules, this enzyme counteracts the toxicity associated with the formation of D-aminoacyl-tRNA entities in vivo and helps enforce protein L-homochirality. This Clostridium botulinum (strain Kyoto / Type A2) protein is D-aminoacyl-tRNA deacylase.